Here is a 163-residue protein sequence, read N- to C-terminus: Nucleotide-binding protein BLi01194 (163 aa).

It belongs to the YajQ family.

Its function is as follows. Nucleotide-binding protein. The chain is Nucleotide-binding protein BLi01194 from Bacillus licheniformis (strain ATCC 14580 / DSM 13 / JCM 2505 / CCUG 7422 / NBRC 12200 / NCIMB 9375 / NCTC 10341 / NRRL NRS-1264 / Gibson 46).